A 170-amino-acid polypeptide reads, in one-letter code: CDP-archaeol synthase (170 aa).

5 consecutive transmembrane segments (helical) span residues Ala9 to Gly29, Gly53 to Pro73, Leu79 to Ile99, Pro114 to Val134, and Gly140 to Ala160.

Belongs to the CDP-archaeol synthase family. Requires Mg(2+) as cofactor.

It is found in the cell membrane. It carries out the reaction 2,3-bis-O-(geranylgeranyl)-sn-glycerol 1-phosphate + CTP + H(+) = CDP-2,3-bis-O-(geranylgeranyl)-sn-glycerol + diphosphate. It functions in the pathway membrane lipid metabolism; glycerophospholipid metabolism. In terms of biological role, catalyzes the formation of CDP-2,3-bis-(O-geranylgeranyl)-sn-glycerol (CDP-archaeol) from 2,3-bis-(O-geranylgeranyl)-sn-glycerol 1-phosphate (DGGGP) and CTP. This reaction is the third ether-bond-formation step in the biosynthesis of archaeal membrane lipids. This is CDP-archaeol synthase from Pyrococcus horikoshii (strain ATCC 700860 / DSM 12428 / JCM 9974 / NBRC 100139 / OT-3).